We begin with the raw amino-acid sequence, 163 residues long: MIDNDGYRLNVGIVICNKKGQVLWAKRYGQYSWQFPQGGIHLTESPEEAMYRELFEELGLNKKDVRILTSTHYWLRYKLPKHLVRWNTDPVCIGQKQRWFLLELTCDDSNINVECTKAPEFDGWCWVSFWYPVRQVVSFKRDVYRQVMKEFFSFVSLIQKHLI.

One can recognise a Nudix hydrolase domain in the interval 6–149 (GYRLNVGIVI…KRDVYRQVMK (144 aa)). The Nudix box motif lies at 38–59 (GGIHLTESPEEAMYRELFEELG).

This sequence belongs to the Nudix hydrolase family. RppH subfamily. The cofactor is a divalent metal cation.

Functionally, accelerates the degradation of transcripts by removing pyrophosphate from the 5'-end of triphosphorylated RNA, leading to a more labile monophosphorylated state that can stimulate subsequent ribonuclease cleavage. This chain is RNA pyrophosphohydrolase, found in Hamiltonella defensa subsp. Acyrthosiphon pisum (strain 5AT).